Consider the following 188-residue polypeptide: Adenylate kinase (188 aa).

12-17 (GSGKTT) contacts ATP. The tract at residues 33–62 (STGDLLRAEVASGSELGKKIDSFISKGNLV) is NMP. AMP contacts are provided by residues T34, R39, 60-62 (NLV), 87-90 (GYPR), and Q94. Residues 129-135 (GRARGAD) form an LID region. ATP is bound at residue R130. Residues R132 and R144 each coordinate AMP. ATP is bound at residue R172.

This sequence belongs to the adenylate kinase family. In terms of assembly, monomer.

Its subcellular location is the cytoplasm. It carries out the reaction AMP + ATP = 2 ADP. It functions in the pathway purine metabolism; AMP biosynthesis via salvage pathway; AMP from ADP: step 1/1. In terms of biological role, catalyzes the reversible transfer of the terminal phosphate group between ATP and AMP. Plays an important role in cellular energy homeostasis and in adenine nucleotide metabolism. The protein is Adenylate kinase of Campylobacter curvus (strain 525.92).